The chain runs to 651 residues: Bromodomain-containing protein 7 (651 aa).

Residue lysine 21 forms a Glycyl lysine isopeptide (Lys-Gly) (interchain with G-Cter in SUMO2) linkage. The segment covering 35–45 (TELSTGSSGHD) has biased composition (polar residues). A disordered region spans residues 35–132 (TELSTGSSGH…SSLAKQEEVE (98 aa)). The segment covering 47–57 (SLFEDKNDHDK) has biased composition (basic and acidic residues). Lysine 52 participates in a covalent cross-link: Glycyl lysine isopeptide (Lys-Gly) (interchain with G-Cter in SUMO2). Over residues 58 to 69 (HKDRKRKKRKKG) the composition is skewed to basic residues. The short motif at 65-96 (KRKKGEKQIPGEEKGRKRRRVKEDKKKRDRDR) is the Nuclear localization signal element. Positions 70–106 (EKQIPGEEKGRKRRRVKEDKKKRDRDRVENEAEKDLQ) are enriched in basic and acidic residues. Glycyl lysine isopeptide (Lys-Gly) (interchain with G-Cter in SUMO2) cross-links involve residues lysine 127, lysine 186, lysine 197, lysine 201, lysine 212, and lysine 241. Residues 131–235 (VEQTPLQEAL…HSGMKILSQE (105 aa)) form the Bromo domain. The tract at residues 253-301 (TRKQKDGTDTSQSGEDGGCWQREREDSGDAEAHAFKSPSKENKKKDKDM) is disordered. The span at 273 to 301 (QREREDSGDAEAHAFKSPSKENKKKDKDM) shows a compositional bias: basic and acidic residues. 2 positions are modified to phosphoserine: serine 279 and serine 289. Residues lysine 305 and lysine 307 each participate in a glycyl lysine isopeptide (Lys-Gly) (interchain with G-Cter in SUMO2) cross-link. Lysine 328 bears the N6-acetyllysine mark. A Glycyl lysine isopeptide (Lys-Gly) (interchain with G-Cter in SUMO2) cross-link involves residue lysine 344. Phosphoserine is present on serine 380. Residue lysine 389 forms a Glycyl lysine isopeptide (Lys-Gly) (interchain with G-Cter in SUMO2) linkage. Residue serine 482 is modified to Phosphoserine. Threonine 514 bears the Phosphothreonine mark. Positions 536–567 (SEEAEIFQKKLDETTRLLRELQEAQNERLSTR) form a coiled coil. A Phosphoserine modification is found at serine 621.

In terms of assembly, interacts with TRIM24, PTPN13 and DVL1. Identified in a complex with SMARCA4/BRG1, SMARCC1/BAF155, SMARCE1/BAF57, DPF2/BAF45D and ARID2, subunits of the SWI/SNF-B (PBAF) chromatin remodeling complex. Interacts with IRF2 and HNRPUL1. Interacts (via N-terminus) with TP53. Interacts (via C-terminus) with EP300. Interacts with BRCA1. Interacts (via bromo domain) with histone H3 (via N-terminus) acetylated at 'Lys-14' (H3K14ac). Has low affinity for histone H3 acetylated at 'Lys-9' (H3K9ac). Has the highest affinity for histone H3 that is acetylated both at 'Lys-9' (H3K9ac) and at 'Lys-14' (H3K14ac). Has very low affinity for non-acetylated histone H3. Interacts (via bromo domain) with histone H4 (via N-terminus) acetylated at 'Lys-8' (H3K8ac) (in vitro).

It is found in the nucleus. It localises to the chromosome. Functionally, acts both as coactivator and as corepressor. May play a role in chromatin remodeling. Activator of the Wnt signaling pathway in a DVL1-dependent manner by negatively regulating the GSK3B phosphotransferase activity. Induces dephosphorylation of GSK3B at 'Tyr-216'. Down-regulates TRIM24-mediated activation of transcriptional activation by AR. Transcriptional corepressor that down-regulates the expression of target genes. Binds to target promoters, leading to increased histone H3 acetylation at 'Lys-9' (H3K9ac). Binds to the ESR1 promoter. Recruits BRCA1 and POU2F1 to the ESR1 promoter. Coactivator for TP53-mediated activation of transcription of a set of target genes. Required for TP53-mediated cell-cycle arrest in response to oncogene activation. Promotes acetylation of TP53 at 'Lys-382', and thereby promotes efficient recruitment of TP53 to target promoters. Inhibits cell cycle progression from G1 to S phase. This is Bromodomain-containing protein 7 (BRD7) from Homo sapiens (Human).